The sequence spans 801 residues: MTTVHDLSSDTMTTAADRAARAIPPVWPLASSVAVNPFLGQTEEHLAQVSARLGRIGNVPVTMPPAHYAALIEDGTITDDDIASASAASRIDNAPDLAEIKRSAAVPFDRPEPHSTIADLAARMSGIDWPGILADRFGHWASGFFDQGQALWAAPRRRGAYDAWRQTATHDLTPEITGLTGFAQFVSETPDTAQEARLRAAKRLGLDDDMLETYLHQLLFSLGGWAQVARYHLWQAELSQTTDETIADLLTIRLLWEEALFLQYEDRIGDRWEATKTAHAQPVTPQRGEIINAILQEAWEHAVQRDLASTIAAPSPERGEDRPTLQAAFCIDVRSEVFRRALEAVNPGIQTLGFAGFFGLTASHKSFASDVDELRLPVLLNAGVTSTSTGENVTAEQTARFKARAKRAWGRFKLAAVSSFAFVEATGPIYAGKLVRDALNIGSDPHDYGPAPVLDPPLPLDAQIDAAETILRAMSLTTDFAPLVVLAGHGANVVNNPFASGLHCGACGGYAGDVNARLLAALLNTPDVRAGLADRGIDVPSDTLFLGALHDTTTDAITLFAKDHPSAAHDAGIAQAETWFAQAGTVTRAERALRLPRADGDADVDLRSRDWAETRPEWALAGCKAFIAAPRHRTAGKSLAGRAFLHDYDWKKDSDFSVLELIMTAPVVVASWISLQYYGSTVAPDVFGSGNKLLHNVTGGIGVVEGNGGTLRAGLPWQSVHEGEGYAHDPLRLSVCIEAPREAMTDILRRHDGVRALFDNRWLHLFALDASGQMAWRYTGDLEWSEMARDARISDDLDAAG.

Zn(2+) is bound by residues Cys-330, Asp-332, His-489, and Cys-504.

The protein belongs to the inorganic carbon transporter (TC 9.A.2) DabA family. Forms a complex with DabB. Requires Zn(2+) as cofactor.

Its subcellular location is the cell inner membrane. Functionally, part of an energy-coupled inorganic carbon pump. The chain is Probable inorganic carbon transporter subunit DabA from Jannaschia sp. (strain CCS1).